We begin with the raw amino-acid sequence, 455 residues long: Transmembrane protease serine 5 (455 aa).

Over 1–49 (MSPTLDDQSPMEIRCTEEGAGPGIFRMELGDQRQSISQSQRWCCLQRGC) the chain is Cytoplasmic. A helical; Signal-anchor for type II membrane protein membrane pass occupies residues 50–70 (VILGVLGLLAGAGIASWLLVL). Residues 71-455 (YLWPAASPSI…DWIHDTVQVR (385 aa)) lie on the Extracellular side of the membrane. One can recognise an SRCR domain in the interval 112–207 (FRINGEDLLL…SGRIVSLKCS (96 aa)). 7 disulfides stabilise this stretch: cysteine 135–cysteine 196, cysteine 148–cysteine 206, cysteine 209–cysteine 328, cysteine 243–cysteine 259, cysteine 342–cysteine 411, cysteine 374–cysteine 390, and cysteine 401–cysteine 429. Residues asparagine 163 and asparagine 170 are each glycosylated (N-linked (GlcNAc...) asparagine). The region spanning 218–453 (IVGGQAVASG…FLDWIHDTVQ (236 aa)) is the Peptidase S1 domain. Residues histidine 258 and aspartate 308 each act as charge relay system in the active site. N-linked (GlcNAc...) asparagine glycosylation is found at asparagine 319 and asparagine 375. Serine 405 acts as the Charge relay system in catalysis.

It belongs to the peptidase S1 family.

The protein localises to the cell membrane. May play a role in hearing. This Mus musculus (Mouse) protein is Transmembrane protease serine 5 (Tmprss5).